Reading from the N-terminus, the 166-residue chain is NADH-ubiquinone oxidoreductase chain 6 (166 aa).

Transmembrane regions (helical) follow at residues 1 to 21, 26 to 46, 47 to 67, 87 to 107, and 139 to 159; these read MMYF…AFAS, IYGG…VVSL, GGSF…LVVF, VFTN…YFSG, and CGGW…FVVL.

It belongs to the complex I subunit 6 family. In terms of assembly, core subunit of respiratory chain NADH dehydrogenase (Complex I) which is composed of 45 different subunits.

The protein resides in the mitochondrion inner membrane. The catalysed reaction is a ubiquinone + NADH + 5 H(+)(in) = a ubiquinol + NAD(+) + 4 H(+)(out). Core subunit of the mitochondrial membrane respiratory chain NADH dehydrogenase (Complex I) which catalyzes electron transfer from NADH through the respiratory chain, using ubiquinone as an electron acceptor. Essential for the catalytic activity and assembly of complex I. This Ornithorhynchus anatinus (Duckbill platypus) protein is NADH-ubiquinone oxidoreductase chain 6 (MT-ND6).